Here is a 431-residue protein sequence, read N- to C-terminus: Adenylosuccinate synthetase (431 aa).

GTP contacts are provided by residues G13–K19 and G41–T43. D14 serves as the catalytic Proton acceptor. Residues D14 and G41 each contribute to the Mg(2+) site. Residues D14–K17, N39–H42, T130, R144, Q225, T240, and R304 contribute to the IMP site. H42 functions as the Proton donor in the catalytic mechanism. Residue A300–R306 coordinates substrate. GTP contacts are provided by residues R306, K332–D334, and S415–G417.

Belongs to the adenylosuccinate synthetase family. As to quaternary structure, homodimer. The cofactor is Mg(2+).

The protein resides in the cytoplasm. It carries out the reaction IMP + L-aspartate + GTP = N(6)-(1,2-dicarboxyethyl)-AMP + GDP + phosphate + 2 H(+). It functions in the pathway purine metabolism; AMP biosynthesis via de novo pathway; AMP from IMP: step 1/2. Its function is as follows. Plays an important role in the de novo pathway of purine nucleotide biosynthesis. Catalyzes the first committed step in the biosynthesis of AMP from IMP. The sequence is that of Adenylosuccinate synthetase from Shewanella halifaxensis (strain HAW-EB4).